Consider the following 644-residue polypeptide: Exoribonuclease 2 (644 aa).

In terms of domain architecture, RNB spans 189–516; that stretch reads REDLTALDFV…NHRLLKAVIK (328 aa). In terms of domain architecture, S1 motif spans 561–643; sequence DTRFAAEIVD…ETRSIIARPV (83 aa).

Belongs to the RNR ribonuclease family. RNase II subfamily.

Its subcellular location is the cytoplasm. The enzyme catalyses Exonucleolytic cleavage in the 3'- to 5'-direction to yield nucleoside 5'-phosphates.. Involved in mRNA degradation. Hydrolyzes single-stranded polyribonucleotides processively in the 3' to 5' direction. The chain is Exoribonuclease 2 from Escherichia coli O45:K1 (strain S88 / ExPEC).